Reading from the N-terminus, the 63-residue chain is Large ribosomal subunit protein uL30 (63 aa).

This sequence belongs to the universal ribosomal protein uL30 family. Part of the 50S ribosomal subunit.

In Rickettsia felis (strain ATCC VR-1525 / URRWXCal2) (Rickettsia azadi), this protein is Large ribosomal subunit protein uL30.